The following is a 288-amino-acid chain: Putative hydrolase LipZ (288 aa).

Belongs to the AB hydrolase superfamily.

The polypeptide is Putative hydrolase LipZ (Mycobacterium tuberculosis (strain CDC 1551 / Oshkosh)).